The primary structure comprises 93 residues: uncharacterized protein (93 aa).

The protein localises to the plastid. It localises to the chloroplast. This is an uncharacterized protein from Diacronema lutheri (Unicellular marine alga).